A 216-amino-acid chain; its full sequence is Probable nicotinate-nucleotide adenylyltransferase (216 aa).

This sequence belongs to the NadD family.

It catalyses the reaction nicotinate beta-D-ribonucleotide + ATP + H(+) = deamido-NAD(+) + diphosphate. It functions in the pathway cofactor biosynthesis; NAD(+) biosynthesis; deamido-NAD(+) from nicotinate D-ribonucleotide: step 1/1. Functionally, catalyzes the reversible adenylation of nicotinate mononucleotide (NaMN) to nicotinic acid adenine dinucleotide (NaAD). The sequence is that of Probable nicotinate-nucleotide adenylyltransferase from Shewanella baltica (strain OS185).